The following is a 179-amino-acid chain: Segregation and condensation protein B (179 aa).

This sequence belongs to the ScpB family. As to quaternary structure, homodimer. Homodimerization may be required to stabilize the binding of ScpA to the Smc head domains. Component of a cohesin-like complex composed of ScpA, ScpB and the Smc homodimer, in which ScpA and ScpB bind to the head domain of Smc. The presence of the three proteins is required for the association of the complex with DNA.

Its subcellular location is the cytoplasm. Participates in chromosomal partition during cell division. May act via the formation of a condensin-like complex containing Smc and ScpA that pull DNA away from mid-cell into both cell halves. In Streptococcus equi subsp. zooepidemicus (strain H70), this protein is Segregation and condensation protein B.